Reading from the N-terminus, the 361-residue chain is Cytosolic Fe-S cluster assembly factor CFD1 (361 aa).

Glycine 37 to serine 44 serves as a coordination point for ATP. 2 residues coordinate [4Fe-4S] cluster: cysteine 218 and cysteine 221. The tract at residues histidine 293–glycine 314 is disordered.

This sequence belongs to the Mrp/NBP35 ATP-binding proteins family. NUBP2/CFD1 subfamily. As to quaternary structure, heterotetramer of 2 NBP35 and 2 CFD1 chains. It depends on [4Fe-4S] cluster as a cofactor.

The protein resides in the cytoplasm. Component of the cytosolic iron-sulfur (Fe/S) protein assembly (CIA) machinery. Required for maturation of extramitochondrial Fe-S proteins. The NBP35-CFD1 heterotetramer forms a Fe-S scaffold complex, mediating the de novo assembly of an Fe-S cluster and its transfer to target apoproteins. This chain is Cytosolic Fe-S cluster assembly factor CFD1, found in Mycosarcoma maydis (Corn smut fungus).